We begin with the raw amino-acid sequence, 359 residues long: Protein Wnt-9b (359 aa).

The N-terminal stretch at 1-23 (MRPAPALALAALCLLVLPAAAAA) is a signal peptide. 11 disulfides stabilise this stretch: Cys91-Cys102, Cys137-Cys145, Cys147-Cys164, Cys212-Cys226, Cys214-Cys221, Cys293-Cys318, Cys307-Cys313, Cys317-Cys357, Cys333-Cys348, Cys335-Cys345, and Cys340-Cys341. An N-linked (GlcNAc...) asparagine glycan is attached at Asn101. A lipid anchor (O-palmitoleoyl serine; by PORCN) is attached at Ser218.

It belongs to the Wnt family. In terms of assembly, forms a soluble 1:1 complex with AFM; this prevents oligomerization and is required for prolonged biological activity. The complex with AFM may represent the physiological form in body fluids. Component of the Wnt-Fzd-LRP5-LRP6 signaling complex that contains a WNT protein, a FZD protein and LRP5 or LRP6. Interacts directly in the complex with LRP6. Interacts with PKD1 (via extracellular domain). In terms of processing, palmitoleoylation is required for efficient binding to frizzled receptors. Depalmitoleoylation leads to Wnt signaling pathway inhibition.

It is found in the secreted. The protein localises to the extracellular space. It localises to the extracellular matrix. Functionally, ligand for members of the frizzled family of seven transmembrane receptors. Functions in the canonical Wnt/beta-catenin signaling pathway. Required for normal embryonic kidney development, and for normal development of the urogenital tract, including uterus and part of the oviduct and the upper vagina in females, and epididymis and vas deferens in males. Activates a signaling cascade in the metanephric mesenchyme that induces tubulogenesis. Acts upstream of WNT4 in the signaling pathways that mediate development of kidney tubules and the Muellerian ducts. Plays a role in cranofacial development and is required for normal fusion of the palate during embryonic development. The sequence is that of Protein Wnt-9b (Wnt9b) from Mus musculus (Mouse).